The following is an 89-amino-acid chain: Cell division topological specificity factor (89 aa).

It belongs to the MinE family.

Functionally, prevents the cell division inhibition by proteins MinC and MinD at internal division sites while permitting inhibition at polar sites. This ensures cell division at the proper site by restricting the formation of a division septum at the midpoint of the long axis of the cell. The polypeptide is Cell division topological specificity factor (Pectobacterium carotovorum subsp. carotovorum (strain PC1)).